A 100-amino-acid polypeptide reads, in one-letter code: Urease subunit gamma (100 aa).

The protein belongs to the urease gamma subunit family. Heterotrimer of UreA (gamma), UreB (beta) and UreC (alpha) subunits. Three heterotrimers associate to form the active enzyme.

The protein localises to the cytoplasm. The enzyme catalyses urea + 2 H2O + H(+) = hydrogencarbonate + 2 NH4(+). It participates in nitrogen metabolism; urea degradation; CO(2) and NH(3) from urea (urease route): step 1/1. The sequence is that of Urease subunit gamma from Arthrobacter sp. (strain FB24).